We begin with the raw amino-acid sequence, 330 residues long: LIM domain-containing protein pin-2 (330 aa).

LIM zinc-binding domains are found at residues 21 to 73 (CERC…CEHD), 82 to 132 (CAKC…CFLC), 144 to 194 (CNKC…CPRC), 202 to 255 (CFDC…CRDD), and 264 to 315 (CFIC…CKKC).

In terms of tissue distribution, expressed in neurons and intestine.

Its subcellular location is the cytoplasm. It localises to the nucleus. This chain is LIM domain-containing protein pin-2 (pin-2), found in Caenorhabditis elegans.